A 464-amino-acid polypeptide reads, in one-letter code: 3-isopropylmalate dehydratase large subunit (464 aa).

[4Fe-4S] cluster is bound by residues cysteine 337, cysteine 397, and cysteine 400.

This sequence belongs to the aconitase/IPM isomerase family. LeuC type 1 subfamily. As to quaternary structure, heterodimer of LeuC and LeuD. [4Fe-4S] cluster is required as a cofactor.

The enzyme catalyses (2R,3S)-3-isopropylmalate = (2S)-2-isopropylmalate. Its pathway is amino-acid biosynthesis; L-leucine biosynthesis; L-leucine from 3-methyl-2-oxobutanoate: step 2/4. Catalyzes the isomerization between 2-isopropylmalate and 3-isopropylmalate, via the formation of 2-isopropylmaleate. The polypeptide is 3-isopropylmalate dehydratase large subunit (Bacillus cereus (strain ZK / E33L)).